An 873-amino-acid polypeptide reads, in one-letter code: Probable inorganic carbon transporter subunit DabA (873 aa).

Residues C393, D395, H575, and C590 each coordinate Zn(2+).

The protein belongs to the inorganic carbon transporter (TC 9.A.2) DabA family. As to quaternary structure, forms a complex with DabB. Requires Zn(2+) as cofactor.

It is found in the cell membrane. Part of an energy-coupled inorganic carbon pump. The chain is Probable inorganic carbon transporter subunit DabA from Bacillus licheniformis (strain ATCC 14580 / DSM 13 / JCM 2505 / CCUG 7422 / NBRC 12200 / NCIMB 9375 / NCTC 10341 / NRRL NRS-1264 / Gibson 46).